A 367-amino-acid polypeptide reads, in one-letter code: GTP cyclohydrolase FolE2 (367 aa).

The protein belongs to the GTP cyclohydrolase IV family.

The catalysed reaction is GTP + H2O = 7,8-dihydroneopterin 3'-triphosphate + formate + H(+). It participates in cofactor biosynthesis; 7,8-dihydroneopterin triphosphate biosynthesis; 7,8-dihydroneopterin triphosphate from GTP: step 1/1. In terms of biological role, converts GTP to 7,8-dihydroneopterin triphosphate. This chain is GTP cyclohydrolase FolE2, found in Ruegeria pomeroyi (strain ATCC 700808 / DSM 15171 / DSS-3) (Silicibacter pomeroyi).